The following is a 140-amino-acid chain: ATP synthase epsilon chain (140 aa).

This sequence belongs to the ATPase epsilon chain family. In terms of assembly, F-type ATPases have 2 components, CF(1) - the catalytic core - and CF(0) - the membrane proton channel. CF(1) has five subunits: alpha(3), beta(3), gamma(1), delta(1), epsilon(1). CF(0) has three main subunits: a, b and c.

It localises to the cell inner membrane. Functionally, produces ATP from ADP in the presence of a proton gradient across the membrane. The sequence is that of ATP synthase epsilon chain from Saccharophagus degradans (strain 2-40 / ATCC 43961 / DSM 17024).